The sequence spans 258 residues: Isoprenyl transferase (258 aa).

Residue aspartate 38 is part of the active site. Residue aspartate 38 coordinates Mg(2+). Substrate contacts are provided by residues 39–42, tryptophan 43, arginine 51, histidine 55, and 83–85; these read GNGR and STE. Catalysis depends on asparagine 86, which acts as the Proton acceptor. Substrate is bound by residues tryptophan 87, arginine 89, arginine 206, and 212 to 214; that span reads RIS. A Mg(2+)-binding site is contributed by glutamate 225.

This sequence belongs to the UPP synthase family. In terms of assembly, homodimer. It depends on Mg(2+) as a cofactor.

Its function is as follows. Catalyzes the condensation of isopentenyl diphosphate (IPP) with allylic pyrophosphates generating different type of terpenoids. The chain is Isoprenyl transferase from Bacillus cereus (strain ATCC 14579 / DSM 31 / CCUG 7414 / JCM 2152 / NBRC 15305 / NCIMB 9373 / NCTC 2599 / NRRL B-3711).